We begin with the raw amino-acid sequence, 155 residues long: Interleukin-2 (155 aa).

An N-terminal signal peptide occupies residues 1–20; that stretch reads MYKMQLVACIALSLVLITNS. Thr-23 is a glycosylation site (O-linked (GalNAc...) threonine). A disulfide bridge links Cys-77 with Cys-125.

This sequence belongs to the IL-2 family.

Its subcellular location is the secreted. Functionally, cytokine produced by activated CD4-positive helper T-cells and to a lesser extend activated CD8-positive T-cells and natural killer (NK) cells that plays pivotal roles in the immune response and tolerance. Binds to a receptor complex composed of either the high-affinity trimeric IL-2R (IL2RA/CD25, IL2RB/CD122 and IL2RG/CD132) or the low-affinity dimeric IL-2R (IL2RB and IL2RG). Interaction with the receptor leads to oligomerization and conformation changes in the IL-2R subunits resulting in downstream signaling starting with phosphorylation of JAK1 and JAK3. In turn, JAK1 and JAK3 phosphorylate the receptor to form a docking site leading to the phosphorylation of several substrates including STAT5. This process leads to activation of several pathways including STAT, phosphoinositide-3-kinase/PI3K and mitogen-activated protein kinase/MAPK pathways. Functions as a T-cell growth factor and can increase NK-cell cytolytic activity as well. Promotes strong proliferation of activated B-cells and subsequently immunoglobulin production. Plays a pivotal role in regulating the adaptive immune system by controlling the survival and proliferation of regulatory T-cells, which are required for the maintenance of immune tolerance. Moreover, participates in the differentiation and homeostasis of effector T-cell subsets, including Th1, Th2, Th17 as well as memory CD8-positive T-cells. This chain is Interleukin-2 (IL2), found in Dasypus novemcinctus (Nine-banded armadillo).